The following is a 515-amino-acid chain: Probable NADPH:adrenodoxin oxidoreductase, mitochondrial (515 aa).

Residues Ala-52, Glu-73, Leu-81, and Ile-119 each coordinate FAD. NADP(+)-binding positions include 191–194 (QGNV), 236–237 (RR), and Glu-248. FAD is bound by residues Trp-419 and 426–428 (GSI). Gly-426 is an NADP(+) binding site.

The protein belongs to the ferredoxin--NADP reductase type 1 family. FAD is required as a cofactor.

Its subcellular location is the mitochondrion inner membrane. It catalyses the reaction 2 reduced [adrenodoxin] + NADP(+) + H(+) = 2 oxidized [adrenodoxin] + NADPH. This chain is Probable NADPH:adrenodoxin oxidoreductase, mitochondrial (fdxr), found in Dictyostelium discoideum (Social amoeba).